The sequence spans 269 residues: Phosphonoacetaldehyde hydrolase (269 aa).

Asp10 functions as the Nucleophile in the catalytic mechanism. Mg(2+)-binding residues include Asp10 and Ala12. Lys52 acts as the Schiff-base intermediate with substrate in catalysis. Asp186 contacts Mg(2+).

Belongs to the HAD-like hydrolase superfamily. PhnX family. In terms of assembly, homodimer. The cofactor is Mg(2+).

The catalysed reaction is phosphonoacetaldehyde + H2O = acetaldehyde + phosphate + H(+). Functionally, involved in phosphonate degradation. The polypeptide is Phosphonoacetaldehyde hydrolase (Salmonella typhi).